The sequence spans 333 residues: Fructose-1,6-bisphosphatase class 1 (333 aa).

4 residues coordinate Mg(2+): Glu92, Asp113, Leu115, and Asp116. Substrate-binding positions include 116–119 (DGSS), Asn209, Tyr242, and Lys272. A Mg(2+)-binding site is contributed by Glu278.

This sequence belongs to the FBPase class 1 family. Homotetramer. Mg(2+) is required as a cofactor.

Its subcellular location is the cytoplasm. It carries out the reaction beta-D-fructose 1,6-bisphosphate + H2O = beta-D-fructose 6-phosphate + phosphate. The protein operates within carbohydrate biosynthesis; Calvin cycle. In Chlorobaculum parvum (strain DSM 263 / NCIMB 8327) (Chlorobium vibrioforme subsp. thiosulfatophilum), this protein is Fructose-1,6-bisphosphatase class 1.